The sequence spans 178 residues: Large ribosomal subunit protein uL5 (178 aa).

Belongs to the universal ribosomal protein uL5 family. As to quaternary structure, part of the 50S ribosomal subunit; part of the 5S rRNA/L5/L18/L25 subcomplex. Contacts the 5S rRNA and the P site tRNA. Forms a bridge to the 30S subunit in the 70S ribosome.

Its function is as follows. This is one of the proteins that bind and probably mediate the attachment of the 5S RNA into the large ribosomal subunit, where it forms part of the central protuberance. In the 70S ribosome it contacts protein S13 of the 30S subunit (bridge B1b), connecting the 2 subunits; this bridge is implicated in subunit movement. Contacts the P site tRNA; the 5S rRNA and some of its associated proteins might help stabilize positioning of ribosome-bound tRNAs. This chain is Large ribosomal subunit protein uL5, found in Acinetobacter baumannii (strain AB0057).